The chain runs to 273 residues: Light-independent protochlorophyllide reductase iron-sulfur ATP-binding protein (273 aa).

ATP is bound by residues Gly12–Thr17 and Lys41. Residue Ser16 coordinates Mg(2+). Positions 97 and 131 each coordinate [4Fe-4S] cluster. Asn182 to Arg183 provides a ligand contact to ATP.

It belongs to the NifH/BchL/ChlL family. As to quaternary structure, homodimer. Protochlorophyllide reductase is composed of three subunits; BchL, BchN and BchB. The cofactor is [4Fe-4S] cluster.

The catalysed reaction is chlorophyllide a + oxidized 2[4Fe-4S]-[ferredoxin] + 2 ADP + 2 phosphate = protochlorophyllide a + reduced 2[4Fe-4S]-[ferredoxin] + 2 ATP + 2 H2O. It participates in porphyrin-containing compound metabolism; bacteriochlorophyll biosynthesis (light-independent). Its function is as follows. Component of the dark-operative protochlorophyllide reductase (DPOR) that uses Mg-ATP and reduced ferredoxin to reduce ring D of protochlorophyllide (Pchlide) to form chlorophyllide a (Chlide). This reaction is light-independent. The L component serves as a unique electron donor to the NB-component of the complex, and binds Mg-ATP. This is Light-independent protochlorophyllide reductase iron-sulfur ATP-binding protein from Chloroflexus aggregans (strain MD-66 / DSM 9485).